Here is a 690-residue protein sequence, read N- to C-terminus: Methionine--tRNA ligase 1 (690 aa).

The 'HIGH' region signature appears at 11-21 (PYANGHIHIGH). Zn(2+)-binding residues include cysteine 142, cysteine 145, cysteine 155, and cysteine 158. A 'KMSKS' region motif is present at residues 328–332 (KMSKS). Position 331 (lysine 331) interacts with ATP. Positions 590–690 (DFSKVDLRVA…SGAKPGMRVH (101 aa)) constitute a tRNA-binding domain.

Belongs to the class-I aminoacyl-tRNA synthetase family. MetG type 1 subfamily. Homodimer. The cofactor is Zn(2+).

The protein localises to the cytoplasm. It catalyses the reaction tRNA(Met) + L-methionine + ATP = L-methionyl-tRNA(Met) + AMP + diphosphate. Its function is as follows. Is required not only for elongation of protein synthesis but also for the initiation of all mRNA translation through initiator tRNA(fMet) aminoacylation. The sequence is that of Methionine--tRNA ligase 1 from Sorangium cellulosum (strain So ce56) (Polyangium cellulosum (strain So ce56)).